The chain runs to 287 residues: Troponin T, cardiac muscle (287 aa).

Composition is skewed to acidic residues over residues 1 to 31 (MSDV…EEAG) and 44 to 59 (EDGE…DGPV). 2 disordered regions span residues 1 to 85 (MSDV…GERV) and 124 to 208 (KDRI…EKKK). The residue at position 2 (S2) is an N-acetylserine. S2 is subject to Phosphoserine; by CK2. Over residues 66 to 79 (APGPFMPNLVPPKI) the composition is skewed to pro residues. Basic and acidic residues-rich tracts occupy residues 124–173 (KDRI…DEAR) and 192–208 (QAER…EKKK). The residue at position 197 (S197) is a Phosphoserine; by PKC/PRKCA. T202 bears the Phosphothreonine; by PKC/PRKCA and RAF1 mark. A Phosphothreonine; by PKC/PRKCA modification is found at T283.

The protein belongs to the troponin T family. In terms of processing, phosphorylation at Thr-202 by PRKCA induces significant reduction in myofilament calcium sensitivity and actomyosin ATPase activity.

Troponin T is the tropomyosin-binding subunit of troponin, the thin filament regulatory complex which confers calcium-sensitivity to striated muscle actomyosin ATPase activity. The protein is Troponin T, cardiac muscle (TNNT2) of Ovis aries (Sheep).